The primary structure comprises 546 residues: (-)-5-epieremophilene synthase STPS1 (546 aa).

Positions 299, 303, 442, 446, and 450 each coordinate Mg(2+). Residues 299–303 carry the DDXXD motif motif; it reads DDTYD.

This sequence belongs to the terpene synthase family. Tpsa subfamily. Monomer. Requires Mg(2+) as cofactor. In terms of tissue distribution, highly expressed in leaves and at lower levels in flowers.

It catalyses the reaction (2E,6E)-farnesyl diphosphate = (-)-5-epi-eremophilene + diphosphate. The protein operates within secondary metabolite biosynthesis; terpenoid biosynthesis. In terms of biological role, sesquiterpene synthase that catalyzes the conversion of farnesyl diphosphate to (-)-5-epi-eremophilene. This chain is (-)-5-epieremophilene synthase STPS1, found in Salvia miltiorrhiza (Chinese sage).